Reading from the N-terminus, the 274-residue chain is Thiazole synthase (274 aa).

The active-site Schiff-base intermediate with DXP is the K111. 1-deoxy-D-xylulose 5-phosphate is bound by residues G172, 198 to 199 (AG), and 220 to 221 (NT).

This sequence belongs to the ThiG family. Homotetramer. Forms heterodimers with either ThiH or ThiS.

It is found in the cytoplasm. The enzyme catalyses [ThiS sulfur-carrier protein]-C-terminal-Gly-aminoethanethioate + 2-iminoacetate + 1-deoxy-D-xylulose 5-phosphate = [ThiS sulfur-carrier protein]-C-terminal Gly-Gly + 2-[(2R,5Z)-2-carboxy-4-methylthiazol-5(2H)-ylidene]ethyl phosphate + 2 H2O + H(+). The protein operates within cofactor biosynthesis; thiamine diphosphate biosynthesis. Functionally, catalyzes the rearrangement of 1-deoxy-D-xylulose 5-phosphate (DXP) to produce the thiazole phosphate moiety of thiamine. Sulfur is provided by the thiocarboxylate moiety of the carrier protein ThiS. In vitro, sulfur can be provided by H(2)S. The sequence is that of Thiazole synthase from Gloeobacter violaceus (strain ATCC 29082 / PCC 7421).